The primary structure comprises 588 residues: Aspartate--tRNA ligase (588 aa).

Glu-172 lines the L-aspartate pocket. The segment at 196–199 is aspartate; the sequence is QLFK. L-aspartate is bound at residue Arg-218. Residues 218–220 and Gln-227 contribute to the ATP site; that span reads RDE. L-aspartate is bound at residue His-449. Glu-483 contacts ATP. Arg-490 is an L-aspartate binding site. ATP is bound at residue 535–538; sequence GLDR.

This sequence belongs to the class-II aminoacyl-tRNA synthetase family. Type 1 subfamily. As to quaternary structure, homodimer.

It is found in the cytoplasm. The enzyme catalyses tRNA(Asp) + L-aspartate + ATP = L-aspartyl-tRNA(Asp) + AMP + diphosphate. Catalyzes the attachment of L-aspartate to tRNA(Asp) in a two-step reaction: L-aspartate is first activated by ATP to form Asp-AMP and then transferred to the acceptor end of tRNA(Asp). This chain is Aspartate--tRNA ligase, found in Haemophilus influenzae (strain 86-028NP).